The following is a 116-amino-acid chain: Small ribosomal subunit protein bS16 (116 aa).

Positions 88 to 116 (RNNPKAAVPGKRMAELAKKKADRAAASAE) are disordered. A compositionally biased stretch (basic and acidic residues) spans 99–110 (RMAELAKKKADR).

Belongs to the bacterial ribosomal protein bS16 family.

The protein is Small ribosomal subunit protein bS16 of Cereibacter sphaeroides (strain ATCC 17029 / ATH 2.4.9) (Rhodobacter sphaeroides).